Reading from the N-terminus, the 247-residue chain is Type II restriction enzyme SmaI (247 aa).

Requires Mg(2+) as cofactor. K(+) serves as cofactor.

It carries out the reaction Endonucleolytic cleavage of DNA to give specific double-stranded fragments with terminal 5'-phosphates.. In terms of biological role, a P subtype restriction enzyme that recognizes the double-stranded sequence 5'-CCCGGG-3' and cleaves after C-3. The protein is Type II restriction enzyme SmaI (smaIR) of Serratia marcescens.